We begin with the raw amino-acid sequence, 406 residues long: E3 ubiquitin-protein ligase RING1 (406 aa).

Thr-24 is modified (phosphothreonine). Residues 30 to 234 (MDGTEIAVSP…GGAGSEDSGD (205 aa)) form a necessary for transcriptional repression region. Phosphoserine is present on Ser-38. The RING-type zinc finger occupies 48–88 (CPICLDMLKNTMTTKECLHRFCSDCIVTALRSGNKECPTCR). Residues Ser-140, Ser-187, and Ser-190 each carry the phosphoserine modification. 2 disordered regions span residues 151–263 (HRAQ…GEIE) and 309–354 (QQQE…PSLE). Acidic residues predominate over residues 175–187 (EPGEGEGDGEDVS). The Nuclear localization signal motif lies at 201–204 (KRPR). Over residues 214–228 (GTGGGAAGGACGGAG) the composition is skewed to gly residues. Thr-215 carries the post-translational modification Phosphothreonine. Phosphoserine occurs at positions 229 and 232. The segment at 230 to 406 (EDSGDRGGTL…LCYAPTKDPK (177 aa)) is necessary for interaction with CBX2. The span at 235–244 (RGGTLGGGTL) shows a compositional bias: gly residues. Positions 246–258 (PPSPPGAPSPPEP) are enriched in pro residues. Residues Ser-248 and Ser-254 each carry the phosphoserine modification. A compositionally biased stretch (gly residues) spans 317–343 (GGPGGGASDTGGPDGGGGERGVAGGGE).

Component of chromatin-associated Polycomb (PcG) complexes. Part of the E2F6.com-1 complex in G0 phase composed of E2F6, MGA, MAX, TFDP1, CBX3, BAT8, EUHMTASE1, RING1, RNF2/RING2 MBLR, L3MBTL2 and YAF2. Interacts with CBX2 and PCGF6. Component of a PRC1-like complex. Component of repressive BCOR complex containing Polycomb group subcomplex at least composed of RYBP, PCGF1, BCOR and RNF2/RING2. Interacts with PHC2, PCGF2, RNF2; CBX6, CBX7 and CBX8. Interacts with BMI1. Interacts with MN1. Interacts with USP26.

The protein localises to the nucleus speckle. The enzyme catalyses S-ubiquitinyl-[E2 ubiquitin-conjugating enzyme]-L-cysteine + [acceptor protein]-L-lysine = [E2 ubiquitin-conjugating enzyme]-L-cysteine + N(6)-ubiquitinyl-[acceptor protein]-L-lysine.. It participates in protein modification; protein ubiquitination. Constitutes one of the E3 ubiquitin-protein ligases that mediate monoubiquitination of 'Lys-119' of histone H2A, thereby playing a central role in histone code and gene regulation. H2A 'Lys-119' ubiquitination gives a specific tag for epigenetic transcriptional repression and participates in X chromosome inactivation of female mammals. Essential component of a Polycomb group (PcG) multiprotein PRC1-like complex, a complex class required to maintain the transcriptionally repressive state of many genes, including Hox genes, throughout development. PcG PRC1 complex acts via chromatin remodeling and modification of histones, rendering chromatin heritably changed in its expressibility. Compared to RNF2/RING2, it does not have the main E3 ubiquitin ligase activity on histone H2A, and it may rather act as a modulator of RNF2/RING2 activity. The polypeptide is E3 ubiquitin-protein ligase RING1 (Mus musculus (Mouse)).